The primary structure comprises 252 residues: MFSEEVLKNVFPLLEGEDLASCMGVCKQWRDIARDDFYWKCQCAKKWPSVCKRHKPPTETYYKMYQTFSKRRLNRALPPPRLSFENLEFFIDIWSEERLVFSGLIPGVALENGIETLPLGISNVLRTHLGRPDYKMVVPAEPRFTIPLNQSVSVSVLVARNDSDKVARIINRSVFDYIDRSSYRALAFEYLDLSPCYPFISGIRAWISLLFMDVEDMNDDGLLDVFGIQLDFNDVADTKEEVLWLLDMLDWK.

The F-box domain occupies 1-42 (MFSEEVLKNVFPLLEGEDLASCMGVCKQWRDIARDDFYWKCQ).

This Arabidopsis thaliana (Mouse-ear cress) protein is F-box protein At5g39250.